We begin with the raw amino-acid sequence, 929 residues long: Protein unc-45 homolog A (929 aa).

3 TPR repeats span residues valine 6 to proline 39, alanine 43 to aspartate 76, and valine 77 to asparagine 110. N6-acetyllysine is present on lysine 55. Lysine 468 is modified (N6-acetyllysine).

In terms of assembly, interacts with PGR isoforms A and B as well as with NR3C1 in the absence of ligand, and with HSP90AB1. Binding to HSP90AB1 involves 2 UNC45A monomers per HSP90AB1 dimer.

Its subcellular location is the cytoplasm. It localises to the perinuclear region. The protein resides in the nucleus. Its function is as follows. May act as co-chaperone for HSP90 (Potential). Prevents the stimulation of HSP90AB1 ATPase activity by AHSA1. Positive factor in promoting PGR function in the cell. May be necessary for proper folding of myosin (Potential). Necessary for normal cell proliferation. Necessary for normal myotube formation and myosin accumulation during muscle cell development. May play a role in erythropoiesis in stroma cells in the spleen. This chain is Protein unc-45 homolog A (UNC45A), found in Pongo abelii (Sumatran orangutan).